The primary structure comprises 313 residues: ADP-L-glycero-D-manno-heptose-6-epimerase (313 aa).

NADP(+)-binding positions include 10–11 (FI), 31–32 (DD), Arg38, Lys53, 75–79 (EGACS), and Asn92. Catalysis depends on Tyr139, which acts as the Proton acceptor. Lys143 contributes to the NADP(+) binding site. Asn168 lines the substrate pocket. Residues Val169 and Lys177 each contribute to the NADP(+) site. Lys177 functions as the Proton acceptor in the catalytic mechanism. Substrate-binding positions include Lys179, His186, 200–203 (FEGW), Arg213, and Tyr277.

It belongs to the NAD(P)-dependent epimerase/dehydratase family. HldD subfamily. Homopentamer. The cofactor is NADP(+).

It carries out the reaction ADP-D-glycero-beta-D-manno-heptose = ADP-L-glycero-beta-D-manno-heptose. The protein operates within nucleotide-sugar biosynthesis; ADP-L-glycero-beta-D-manno-heptose biosynthesis; ADP-L-glycero-beta-D-manno-heptose from D-glycero-beta-D-manno-heptose 7-phosphate: step 4/4. Catalyzes the interconversion between ADP-D-glycero-beta-D-manno-heptose and ADP-L-glycero-beta-D-manno-heptose via an epimerization at carbon 6 of the heptose. The chain is ADP-L-glycero-D-manno-heptose-6-epimerase from Marinobacter nauticus (strain ATCC 700491 / DSM 11845 / VT8) (Marinobacter aquaeolei).